The sequence spans 265 residues: Short-chain dehydrogenase/reductase fsr5 (265 aa).

The N-terminal stretch at 1–32 (MASLGKYVSKLAGSRVLVIGGSSGIGFGVAEA) is a signal peptide. NADP(+) contacts are provided by Ser-22, Ser-23, Ile-25, Ser-45, and Lys-50. Residue Asn-62 is glycosylated (N-linked (GlcNAc...) asparagine). 3 residues coordinate NADP(+): Asn-88, Arg-130, and Thr-204. Asn-218 and Asn-250 each carry an N-linked (GlcNAc...) asparagine glycan.

It belongs to the short-chain dehydrogenases/reductases (SDR) family.

Functionally, short-chain dehydrogenase/reductase; part of the gene cluster that mediates the biosynthesis of fusarubins, highly pigmented naphthoquinones responsible for the coloration of the fruiting bodies. The non-reducing polyketide synthase FSR1 is responsible for the condensation of seven acetyl-CoA units to yield a haptaketide. After rings A and B are formed by aldol-type cyclization, the PKS-derived product is released as 6-O-demethylfusarubinaldehyde. Then, two hydroxyl groups at C-5 and C-10 are incorporated by FSR3, and simultaneously hydroxyl groups at C-6 and C-8 are methylated by FSR2. The aldehyde is, on the one hand, reduced by FSR3 to 8-O-methylfusarubin alcohol, which equilibrates mainly with 8-O-methylfusarubin and only small amounts of 8-O-methylnectriafurone. On the other hand, the aldehyde can be oxidized to form 8-O-methylfusarubinic acid, a reaction driven by FSR3 equilibrating with 8-O-methylfusarubinlactone, finally resulting in 8-O-methylanhydrofusarubinlactol after a further reduction step and loss of water. 8-O-Methylfusarubinic acid can also undergo decarboxylation, resulting in 8-O-methyl-13-hydroxynorjavanicin after another hydroxylation step at C-13. Both steps are most likely also accomplished by FSR3. No enzymatic function has been determined so far for either FSR4 and FSR5. Their deletion does not alter the product spectrum, but the possibility that they catalyze specific enzymatic steps during perithecium development cannot be ruled out. FSR4 might possess a regulatory function in the biosynthesis of fusarubins. This is Short-chain dehydrogenase/reductase fsr5 from Gibberella fujikuroi (strain CBS 195.34 / IMI 58289 / NRRL A-6831) (Bakanae and foot rot disease fungus).